The primary structure comprises 440 residues: MNTILPADPARDEVLAGRPTLWVNPSYRKRAIDTSDLPVSRDDVQIARLNWQRLAPLLAECFPELKDSDGEIRSELVELKELREALGYRTREFGNVFIKADSHLPVAGSIKARGGVYEVFLFAENLARQNGLLGDGEDIRKLAAEEARSFFSGYTVAVGSTGNLGLSVGIAARALGFKATVHMSSDAKAWKVERLRRLGVEVIQHEADYTSAVENARDIADADPTIYFVDDEQSRHLFLGYSAAASELAAQLDERGITIDEENPLFLYLPCGIGGAPGGVAFGAKAIFGDNVHAFFVEPVQSPCTLVHMMSGSQELVSVYDVGLTNKTEADGMAVARMSAFVAKVMREMLAGVYTAADDDLFKLLRMAWITQRQKLEPSAAAALLGPHFLVHHGEGRRFQAEQGIEEKMSRATHILWTTGGSFVPEEQFQNFLRQAEAVG.

K111 is subject to N6-(pyridoxal phosphate)lysine.

Belongs to the serine/threonine dehydratase family. DsdA subfamily. It depends on pyridoxal 5'-phosphate as a cofactor.

It carries out the reaction D-serine = pyruvate + NH4(+). This is Probable D-serine dehydratase from Rhizobium leguminosarum bv. trifolii (strain WSM2304).